The following is a 230-amino-acid chain: Sugar fermentation stimulation protein homolog (230 aa).

The protein belongs to the SfsA family.

The protein is Sugar fermentation stimulation protein homolog of Clostridium botulinum (strain Alaska E43 / Type E3).